The following is a 363-amino-acid chain: DNA replication and repair protein RecF (363 aa).

30–37 (GINGSGKS) is a binding site for ATP.

This sequence belongs to the RecF family.

It is found in the cytoplasm. Functionally, the RecF protein is involved in DNA metabolism; it is required for DNA replication and normal SOS inducibility. RecF binds preferentially to single-stranded, linear DNA. It also seems to bind ATP. This is DNA replication and repair protein RecF from Pseudoalteromonas atlantica (strain T6c / ATCC BAA-1087).